The primary structure comprises 455 residues: Argininosuccinate lyase (455 aa).

This sequence belongs to the lyase 1 family. Argininosuccinate lyase subfamily.

The protein resides in the cytoplasm. The enzyme catalyses 2-(N(omega)-L-arginino)succinate = fumarate + L-arginine. It participates in amino-acid biosynthesis; L-arginine biosynthesis; L-arginine from L-ornithine and carbamoyl phosphate: step 3/3. The chain is Argininosuccinate lyase from Shewanella halifaxensis (strain HAW-EB4).